Consider the following 105-residue polypeptide: Small ribosomal subunit protein uS10c (105 aa).

Belongs to the universal ribosomal protein uS10 family. Part of the 30S ribosomal subunit.

The protein resides in the plastid. Its subcellular location is the cyanelle. Involved in the binding of tRNA to the ribosomes. This chain is Small ribosomal subunit protein uS10c (rps10), found in Cyanophora paradoxa.